Reading from the N-terminus, the 419-residue chain is Methyltransferase/ribosomally synthesized type I borosin cyclic peptide precursor gjuMa (419 aa).

The methyltransferase domain stretch occupies residues 1–255 (MATPIATTTN…AISTLYVPPR (255 aa)). Catalysis depends on residues arginine 79, tyrosine 83, and tyrosine 105. Positions 105, 107, 110, 137, 179, 217, 248, and 249 each coordinate S-adenosyl-L-methionine. The segment at 256-381 (DISPVDPTMA…GAVYALMSRP (126 aa)) is clasp domain. Positions 382-404 (TGDIAREKELTNDEIANNHGAPY) are precursor leader. Serine 408 bears the N-methylserine mark. Residue alanine 409 is modified to N-methylalanine. At valine 410 the chain carries N-methylvaline. N-methylisoleucine is present on residues isoleucine 411 and isoleucine 412. An N-methylalanine mark is found at alanine 413 and alanine 414. 2 positions are modified to N-methylisoleucine: isoleucine 415 and isoleucine 416.

It in the N-terminal section; belongs to the precorrin methyltransferase family. Homodimer. Post-translationally, gjuMA automethylates at Ser-408, Ala-409, Val-410, Ile-411, Ile-412, Ala-413, Ala-414, Ile-415 and Ile-416 before being processed by ae prolyloligopeptidase which likely forms a peptidyl ester upon removal of the follower propeptide, which then undergoes macrocyclization with the N-terminus of the modified core peptide. Peptide backbone alpha-N-methylations change the physicochemical properties of amide bonds to provide structural constraints and other favorable characteristics including biological membrane permeability to peptides.

The protein operates within secondary metabolite biosynthesis. Functionally, fusion protein of the methyltransferase gjuM and the type I borosin core peptide; part of the gene cluster that mediates the biosynthesis of a type I borosin, a highly methylated cyclic peptide with potent biological activities. Type I borosins derive from the C-terminus of the fusion protein, and it is the same protein that methylates its own C-terminus using S-adenosyl methionine (SAM). The C-terminus is subsequently cleaved off and macrocyclized by a prolyloligopeptidase to give the final product. The chain is Methyltransferase/ribosomally synthesized type I borosin cyclic peptide precursor gjuMa from Gymnopilus junonius (Spectacular rustgill mushroom).